The following is a 467-amino-acid chain: AT-rich interactive domain-containing protein cfi-1 (467 aa).

The tract at residues 1-56 (MSVRIDEPQLFVSMSKEPTQETVNVGGHHDDSSSNCDERVDDQTEEQKSPPASPDL) is disordered. Basic and acidic residues predominate over residues 27–48 (GHHDDSSSNCDERVDDQTEEQK). The ARID domain occupies 181-273 (DVKRKEWLDD…YLYDYECEKE (93 aa)). The 109-residue stretch at 356-464 (AILEAHQRNL…GVLFALDETV (109 aa)) folds into the REKLES domain. The segment at 383 to 441 (LTACSNGNGGNIHNSGRESTSSNDSDIPAKRPKLENDVKTNGASSMRISTKHSDNSKTS) is disordered. Residues 409 to 420 (IPAKRPKLENDV) show a composition bias toward basic and acidic residues. Residues 421–430 (KTNGASSMRI) are compositionally biased toward polar residues.

As to expression, present in IL2 and URA neurons, and in AVD and PVC interneurons. Present in muscles from head and pharynx (at protein level).

It is found in the nucleus. Its function is as follows. Transcription factor. Regulates neuronal subtype identity. Involved in motor neuron fate determination and maintenance, acting as a transcriptional repressor to counteract gene activation by transcription factor unc-3 in a subset of motor neurons. Probably acts by binding to specific promoter elements. Promotes differentiation of URA sensory neurons and prevents them from expressing male-specific CEM neuronal features. Promotes differentiation of AVD and PVC interneurons and their glutamate receptor expression. This chain is AT-rich interactive domain-containing protein cfi-1 (cfi-1), found in Caenorhabditis elegans.